A 420-amino-acid polypeptide reads, in one-letter code: Ribulose bisphosphate carboxylase (420 aa).

The active-site Proton acceptor is Lys155. Residue Lys157 participates in substrate binding. Residues Lys181, Asp183, and Glu184 each coordinate Mg(2+). An N6-carboxylysine modification is found at Lys181. The Proton acceptor role is filled by His273. Substrate is bound by residues Arg274, His306, 343 to 345, and 365 to 368; these read SGG and QAGG.

Belongs to the RuBisCO large chain family. Type III subfamily. As to quaternary structure, homodimer or homodecamer. In contrast to form I RuBisCO, the form III RuBisCO is composed solely of large subunits. The cofactor is Mg(2+).

The catalysed reaction is 2 (2R)-3-phosphoglycerate + 2 H(+) = D-ribulose 1,5-bisphosphate + CO2 + H2O. It catalyses the reaction D-ribulose 1,5-bisphosphate + O2 = 2-phosphoglycolate + (2R)-3-phosphoglycerate + 2 H(+). Functionally, catalyzes the addition of molecular CO(2) and H(2)O to ribulose 1,5-bisphosphate (RuBP), generating two molecules of 3-phosphoglycerate (3-PGA). Functions in an archaeal AMP degradation pathway, together with AMP phosphorylase and R15P isomerase. This is Ribulose bisphosphate carboxylase from Pyrococcus furiosus (strain ATCC 43587 / DSM 3638 / JCM 8422 / Vc1).